The following is a 201-amino-acid chain: Coat protein (201 aa).

The protein belongs to the potexvirus capsid protein family.

It is found in the virion. Its function is as follows. Required for genome encapsidation. Forms ribonucleoprotein complexes along with TGB1 helicase and viral RNA. The polypeptide is Coat protein (Lilium formosanum).